The sequence spans 376 residues: Chaperone protein DnaJ (376 aa).

A J domain is found at 5-72 (DFYEVLGVPK…QKRAAYDQYG (68 aa)). A CR-type zinc finger spans residues 136–214 (GKEAQIRIPS…CHGQGRVKKQ (79 aa)). The Zn(2+) site is built by cysteine 149, cysteine 152, cysteine 166, cysteine 169, cysteine 188, cysteine 191, cysteine 202, and cysteine 205. CXXCXGXG motif repeat units follow at residues 149 to 156 (CETCHGSG), 166 to 173 (CGTCQGSG), 188 to 195 (CPHCRGTG), and 202 to 209 (CTACHGQG). 2 disordered regions span residues 227 to 246 (DGMR…GGPP) and 354 to 376 (KKGG…SFFS). Residues 237 to 246 (GEPGTNGGPP) are compositionally biased toward gly residues. Over residues 367–376 (WTDRLKSFFS) the composition is skewed to basic and acidic residues.

Belongs to the DnaJ family. As to quaternary structure, homodimer. Zn(2+) is required as a cofactor.

Its subcellular location is the cytoplasm. Participates actively in the response to hyperosmotic and heat shock by preventing the aggregation of stress-denatured proteins and by disaggregating proteins, also in an autonomous, DnaK-independent fashion. Unfolded proteins bind initially to DnaJ; upon interaction with the DnaJ-bound protein, DnaK hydrolyzes its bound ATP, resulting in the formation of a stable complex. GrpE releases ADP from DnaK; ATP binding to DnaK triggers the release of the substrate protein, thus completing the reaction cycle. Several rounds of ATP-dependent interactions between DnaJ, DnaK and GrpE are required for fully efficient folding. Also involved, together with DnaK and GrpE, in the DNA replication of plasmids through activation of initiation proteins. This Acidovorax ebreus (strain TPSY) (Diaphorobacter sp. (strain TPSY)) protein is Chaperone protein DnaJ.